The following is a 556-amino-acid chain: Formate--tetrahydrofolate ligase (556 aa).

65 to 72 (TPAGEGKS) is a binding site for ATP.

This sequence belongs to the formate--tetrahydrofolate ligase family.

It catalyses the reaction (6S)-5,6,7,8-tetrahydrofolate + formate + ATP = (6R)-10-formyltetrahydrofolate + ADP + phosphate. Its pathway is one-carbon metabolism; tetrahydrofolate interconversion. This Clostridium perfringens (strain ATCC 13124 / DSM 756 / JCM 1290 / NCIMB 6125 / NCTC 8237 / Type A) protein is Formate--tetrahydrofolate ligase.